A 231-amino-acid chain; its full sequence is NADH-ubiquinone oxidoreductase chain 4 (231 aa).

Helical transmembrane passes span 1–21 (PIAG…YGMI), 34–54 (MFIP…LTCL), 62–82 (LIAY…SIQT), 86–106 (LSGA…LFCL), 118–138 (ILIL…WWLL), 169–189 (TIIL…HIFL), and 211–231 (LLMT…ELVM).

Belongs to the complex I subunit 4 family.

It is found in the mitochondrion membrane. It carries out the reaction a ubiquinone + NADH + 5 H(+)(in) = a ubiquinol + NAD(+) + 4 H(+)(out). Core subunit of the mitochondrial membrane respiratory chain NADH dehydrogenase (Complex I) that is believed to belong to the minimal assembly required for catalysis. Complex I functions in the transfer of electrons from NADH to the respiratory chain. The immediate electron acceptor for the enzyme is believed to be ubiquinone. The protein is NADH-ubiquinone oxidoreductase chain 4 (MT-ND4) of Causus rhombeatus (Rhombic night adder).